A 94-amino-acid chain; its full sequence is Immune protein Tsi6 (94 aa).

Its function is as follows. Immunity protein that plays a role in preventing early activation of toxin Tse6. This Pseudomonas aeruginosa (strain ATCC 15692 / DSM 22644 / CIP 104116 / JCM 14847 / LMG 12228 / 1C / PRS 101 / PAO1) protein is Immune protein Tsi6.